A 521-amino-acid chain; its full sequence is Medium/long-chain-fatty-acid--[acyl-carrier-protein] ligase MbtM (521 aa).

It belongs to the ATP-dependent AMP-binding enzyme family.

The enzyme catalyses a long-chain fatty acid + holo-[ACP] + ATP = a long-chain fatty acyl-[ACP] + AMP + diphosphate. It carries out the reaction a medium-chain fatty acid + holo-[ACP] + ATP = a medium-chain fatty acyl-[ACP] + AMP + diphosphate. The protein operates within siderophore biosynthesis; mycobactin biosynthesis. Its function is as follows. Activates lipidic moieties required for mycobactin biosynthesis. Converts medium- to long-chain aliphatic fatty acids into acyl adenylate, which is further transferred on to the phosphopantetheine arm of the carrier protein MbtL. The chain is Medium/long-chain-fatty-acid--[acyl-carrier-protein] ligase MbtM (mbtM) from Mycobacterium sp. (strain MCS).